Consider the following 130-residue polypeptide: Small ribosomal subunit protein uS11 (130 aa).

Belongs to the universal ribosomal protein uS11 family. As to quaternary structure, part of the 30S ribosomal subunit. Interacts with proteins S7 and S18. Binds to IF-3.

In terms of biological role, located on the platform of the 30S subunit, it bridges several disparate RNA helices of the 16S rRNA. Forms part of the Shine-Dalgarno cleft in the 70S ribosome. This Dehalococcoides mccartyi (strain ATCC BAA-2100 / JCM 16839 / KCTC 5957 / BAV1) protein is Small ribosomal subunit protein uS11.